Reading from the N-terminus, the 514-residue chain is Cholesterol side-chain cleavage enzyme, mitochondrial (514 aa).

A mitochondrion-targeting transit peptide spans 1–39 (MMVSWSVCRSSLALPACGLPSARHNSSMPVVRQALSPDN). Cys-458 provides a ligand contact to heme.

It belongs to the cytochrome P450 family. Heme serves as cofactor. In terms of tissue distribution, in the ovary, not found in early vitellogenic follicles, barely detected in postvitellogenic follicles and abundant in post-ovulatory follicles.

It localises to the mitochondrion inner membrane. The catalysed reaction is 6 reduced [adrenodoxin] + cholesterol + 3 O2 + 6 H(+) = 4-methylpentanal + pregnenolone + 6 oxidized [adrenodoxin] + 4 H2O. The protein operates within lipid metabolism; C21-steroid hormone metabolism. Catalyzes the side-chain cleavage reaction of cholesterol to pregnenolone, the precursor of most steroid hormones. This is Cholesterol side-chain cleavage enzyme, mitochondrial (cyp11a1) from Oncorhynchus mykiss (Rainbow trout).